We begin with the raw amino-acid sequence, 234 residues long: Ribonuclease 3 (234 aa).

The 129-residue stretch at 6–134 (RKSLEERVGH…IVGALYLDGG (129 aa)) folds into the RNase III domain. Glu47 contacts Mg(2+). Asp51 is a catalytic residue. Residues Ser120 and Glu123 each contribute to the Mg(2+) site. Residue Glu123 is part of the active site. Positions 162-231 (DYKTRLQELV…AKNALEMKYK (70 aa)) constitute a DRBM domain.

Belongs to the ribonuclease III family. In terms of assembly, homodimer. It depends on Mg(2+) as a cofactor.

It localises to the cytoplasm. The catalysed reaction is Endonucleolytic cleavage to 5'-phosphomonoester.. Its function is as follows. Digests double-stranded RNA. Involved in the processing of primary rRNA transcript to yield the immediate precursors to the large and small rRNAs (23S and 16S). Processes some mRNAs, and tRNAs when they are encoded in the rRNA operon. Processes pre-crRNA and tracrRNA of type II CRISPR loci if present in the organism. In Bdellovibrio bacteriovorus (strain ATCC 15356 / DSM 50701 / NCIMB 9529 / HD100), this protein is Ribonuclease 3.